The chain runs to 198 residues: Capsid protein (198 aa).

It is found in the virion. In Vitis vinifera (Grape), this protein is Capsid protein.